Consider the following 158-residue polypeptide: Small ribosomal subunit protein uS7 (158 aa).

Belongs to the universal ribosomal protein uS7 family. In terms of assembly, part of the 30S ribosomal subunit. Contacts proteins S9 and S11.

Functionally, one of the primary rRNA binding proteins, it binds directly to 16S rRNA where it nucleates assembly of the head domain of the 30S subunit. Is located at the subunit interface close to the decoding center, probably blocks exit of the E-site tRNA. This Gluconobacter oxydans (strain 621H) (Gluconobacter suboxydans) protein is Small ribosomal subunit protein uS7.